Here is a 154-residue protein sequence, read N- to C-terminus: Ribosomal RNA large subunit methyltransferase H (154 aa).

G102 provides a ligand contact to S-adenosyl-L-methionine.

It belongs to the RNA methyltransferase RlmH family. In terms of assembly, homodimer.

The protein resides in the cytoplasm. The catalysed reaction is pseudouridine(1915) in 23S rRNA + S-adenosyl-L-methionine = N(3)-methylpseudouridine(1915) in 23S rRNA + S-adenosyl-L-homocysteine + H(+). Specifically methylates the pseudouridine at position 1915 (m3Psi1915) in 23S rRNA. This Caulobacter sp. (strain K31) protein is Ribosomal RNA large subunit methyltransferase H.